The primary structure comprises 300 residues: Alpha-ketoglutarate-dependent dioxygenase alkB homolog 4 (300 aa).

Residue Ala-2 is modified to N-acetylalanine. The Fe2OG dioxygenase domain maps to Pro-148–Ser-272. Positions 167, 169, and 252 each coordinate Fe cation. Residue Arg-263 participates in 2-oxoglutarate binding.

Belongs to the alkB family. Interacts with ZFHX3, MLLT3, MLLT1, HSF4, EP300, TES, EIF3C, MTMR6 and PSMA6. It depends on Fe(2+) as a cofactor.

It is found in the cytoplasm. The protein localises to the nucleus. The protein resides in the nucleolus. Its subcellular location is the midbody. The enzyme catalyses an N(6)-methyl-2'-deoxyadenosine in DNA + 2-oxoglutarate + O2 = a 2'-deoxyadenosine in DNA + formaldehyde + succinate + CO2. It catalyses the reaction N(6)-methyl-L-lysyl-[protein] + 2-oxoglutarate + O2 = L-lysyl-[protein] + formaldehyde + succinate + CO2. In terms of biological role, dioxygenase that mediates demethylation of actin monomethylated at 'Lys-84' (K84me1), thereby acting as a regulator of actomyosin-processes. Demethylation of actin K84me1 is required for maintaining actomyosin dynamics supporting normal cleavage furrow ingression during cytokinesis and cell migration. In addition to proteins, also demethylates DNA: specifically demethylates DNA methylated on the 6th position of adenine (N(6)-methyladenosine) DNA, thereby regulating Polycomb silencing. This Mus musculus (Mouse) protein is Alpha-ketoglutarate-dependent dioxygenase alkB homolog 4.